A 103-amino-acid polypeptide reads, in one-letter code: N(4)-acetylcytidine amidohydrolase (103 aa).

Positions 6-101 (ITFFQRFQDD…QTQFYVIEFK (96 aa)) constitute an ASCH domain. Lysine 21 functions as the Proton acceptor in the catalytic mechanism. The active-site Nucleophile is the threonine 24. Glutamate 74 serves as the catalytic Proton donor.

Belongs to the N(4)-acetylcytidine amidohydrolase family.

The enzyme catalyses N(4)-acetylcytidine + H2O = cytidine + acetate + H(+). The catalysed reaction is N(4)-acetyl-2'-deoxycytidine + H2O = 2'-deoxycytidine + acetate + H(+). It carries out the reaction N(4)-acetylcytosine + H2O = cytosine + acetate + H(+). Catalyzes the hydrolysis of N(4)-acetylcytidine (ac4C). In Escherichia fergusonii (strain ATCC 35469 / DSM 13698 / CCUG 18766 / IAM 14443 / JCM 21226 / LMG 7866 / NBRC 102419 / NCTC 12128 / CDC 0568-73), this protein is N(4)-acetylcytidine amidohydrolase (yqfB).